Consider the following 673-residue polypeptide: Inactive polyglycylase TTLL10 (673 aa).

A disordered region spans residues 1–132 (MDHSCTRFIH…ADSDDTNAAG (132 aa)). Basic residues predominate over residues 8–36 (FIHRRGPPTRTRAGFKRGKRPRIQQRPRA). Pro residues predominate over residues 52–62 (ASQPGPCPAPG). Positions 89-105 (PDHDADGHCGPDLEGAE) are enriched in basic and acidic residues. The region spanning 155–552 (PGPFFYIGGS…TFRKSLRGQK (398 aa)) is the TTL domain. Residues 362-365 (QRYI), Lys-375, and Asp-377 contribute to the ATP site. The segment at 569-673 (EADPRPHLGG…EREEPENARP (105 aa)) is disordered. Positions 612–627 (PAPPPLVPQRPRPPGP) are enriched in pro residues. Over residues 661–673 (AKEEREEPENARP) the composition is skewed to basic and acidic residues.

In terms of biological role, inactive polyglycylase. This Homo sapiens (Human) protein is Inactive polyglycylase TTLL10.